A 362-amino-acid chain; its full sequence is Phosphoserine aminotransferase (362 aa).

Arginine 42 serves as a coordination point for L-glutamate. Pyridoxal 5'-phosphate contacts are provided by residues 76–77 (AS), tryptophan 102, threonine 152, aspartate 173, and glutamine 196. Lysine 197 is subject to N6-(pyridoxal phosphate)lysine. 238-239 (NT) lines the pyridoxal 5'-phosphate pocket.

The protein belongs to the class-V pyridoxal-phosphate-dependent aminotransferase family. SerC subfamily. In terms of assembly, homodimer. Pyridoxal 5'-phosphate is required as a cofactor.

The protein localises to the cytoplasm. The enzyme catalyses O-phospho-L-serine + 2-oxoglutarate = 3-phosphooxypyruvate + L-glutamate. It carries out the reaction 4-(phosphooxy)-L-threonine + 2-oxoglutarate = (R)-3-hydroxy-2-oxo-4-phosphooxybutanoate + L-glutamate. It functions in the pathway amino-acid biosynthesis; L-serine biosynthesis; L-serine from 3-phospho-D-glycerate: step 2/3. It participates in cofactor biosynthesis; pyridoxine 5'-phosphate biosynthesis; pyridoxine 5'-phosphate from D-erythrose 4-phosphate: step 3/5. Its function is as follows. Catalyzes the reversible conversion of 3-phosphohydroxypyruvate to phosphoserine and of 3-hydroxy-2-oxo-4-phosphonooxybutanoate to phosphohydroxythreonine. In Chromobacterium violaceum (strain ATCC 12472 / DSM 30191 / JCM 1249 / CCUG 213 / NBRC 12614 / NCIMB 9131 / NCTC 9757 / MK), this protein is Phosphoserine aminotransferase.